A 166-amino-acid chain; its full sequence is Large ribosomal subunit protein uL10 (166 aa).

Belongs to the universal ribosomal protein uL10 family. In terms of assembly, part of the ribosomal stalk of the 50S ribosomal subunit. The N-terminus interacts with L11 and the large rRNA to form the base of the stalk. The C-terminus forms an elongated spine to which L12 dimers bind in a sequential fashion forming a multimeric L10(L12)X complex.

Its function is as follows. Forms part of the ribosomal stalk, playing a central role in the interaction of the ribosome with GTP-bound translation factors. This Staphylococcus epidermidis (strain ATCC 35984 / DSM 28319 / BCRC 17069 / CCUG 31568 / BM 3577 / RP62A) protein is Large ribosomal subunit protein uL10.